The sequence spans 166 residues: Orofacial cleft 1 candidate gene 1 protein homolog (166 aa).

The disordered stretch occupies residues 1–22 (MDKEKFQQKAVKQTKQKKSTSA).

The sequence is that of Orofacial cleft 1 candidate gene 1 protein homolog (Ofcc1) from Mus musculus (Mouse).